The chain runs to 829 residues: Probable methyltransferase PMT26 (829 aa).

The Cytoplasmic segment spans residues Met1–Asn17. A helical; Signal-anchor for type II membrane protein transmembrane segment spans residues Tyr18–Met38. The Lumenal portion of the chain corresponds to Thr39–Gly829. Residues Asp55–Ala258 are disordered. 4 stretches are compositionally biased toward basic and acidic residues: residues Asn85–Ser143, Leu151–Asn160, Thr168–Thr177, and Glu187–Thr231. Residues Asn215, Asn247, Asn264, and Asn270 are each glycosylated (N-linked (GlcNAc...) asparagine). The segment covering Gln241–Asp252 has biased composition (polar residues). Residues Gly271–Gly291 are disordered. Basic and acidic residues predominate over residues Ser280–Gly291. N-linked (GlcNAc...) asparagine glycans are attached at residues Asn302, Asn579, Asn595, and Asn756.

Belongs to the methyltransferase superfamily.

The protein localises to the golgi apparatus membrane. The chain is Probable methyltransferase PMT26 from Arabidopsis thaliana (Mouse-ear cress).